Here is a 336-residue protein sequence, read N- to C-terminus: HTH-type transcriptional regulator AscG (336 aa).

In terms of domain architecture, HTH lacI-type spans 2–56 (TTMLEVAKRAGVSKATVSRVLSGNGYVSQETKDRVFQAVEESGYRPNLLARNLSA). The H-T-H motif DNA-binding region spans 4–23 (MLEVAKRAGVSKATVSRVLS).

In terms of biological role, repressor of the asc operon. The cryptic operon is activated by the insertion of IS186 into the ascG gene. The chain is HTH-type transcriptional regulator AscG (ascG) from Escherichia coli (strain K12).